A 161-amino-acid polypeptide reads, in one-letter code: Small ribosomal subunit protein uS9 (161 aa).

Disordered regions lie at residues 1–28 and 142–161; these read MAQI…PKAP and KERK…FSKR.

It belongs to the universal ribosomal protein uS9 family.

The sequence is that of Small ribosomal subunit protein uS9 from Clavibacter sepedonicus (Clavibacter michiganensis subsp. sepedonicus).